Consider the following 221-residue polypeptide: uncharacterized protein (221 aa).

Transmembrane regions (helical) follow at residues 41 to 63, 78 to 100, 141 to 163, and 178 to 200; these read TGNI…HSLI, AVMY…SSLS, ILAY…ISFL, and LILR…VNLF.

It localises to the cell membrane. This is an uncharacterized protein from Archaeoglobus fulgidus (strain ATCC 49558 / DSM 4304 / JCM 9628 / NBRC 100126 / VC-16).